The sequence spans 93 residues: Large ribosomal subunit protein uL23cz/uL23cy (93 aa).

It belongs to the universal ribosomal protein uL23 family. Part of the 50S ribosomal subunit.

Its subcellular location is the plastid. The protein resides in the chloroplast. Binds to 23S rRNA. The sequence is that of Large ribosomal subunit protein uL23cz/uL23cy (rpl23-A) from Cucumis sativus (Cucumber).